The chain runs to 455 residues: Dihydrolipoyllysine-residue succinyltransferase component of 2-oxoglutarate dehydrogenase complex, mitochondrial (455 aa).

The transit peptide at 1 to 68 directs the protein to the mitochondrion; it reads MLSRSRCVSR…RFFRTTAVCK (68 aa). The 75-residue stretch at 71-145 folds into the Lipoyl-binding domain; that stretch reads VITVKTPAFA…EGGTPLFTLR (75 aa). Position 82 is a phosphoserine (Ser-82). Residue Lys-111 is modified to N6-lipoyllysine. Residues 153–173 show a composition bias toward low complexity; that stretch reads KAKPAEAPAAAAPKAEPAVSA. A disordered region spans residues 153–214; sequence KAKPAEAPAA…KPTAAPPVAE (62 aa). Lys-155 carries the post-translational modification N6-acetyllysine. The span at 174 to 195 shows a compositional bias: pro residues; sequence VPPPPAASIPTQMPPVPSPPQP. The catalytic stretch occupies residues 221–453; the sequence is LRAEHREKMN…AVEDPRVLLL (233 aa). 5 positions are modified to N6-acetyllysine: Lys-269, Lys-274, Lys-275, Lys-279, and Lys-309. Residues His-426 and Asp-430 contribute to the active site.

Belongs to the 2-oxoacid dehydrogenase family. As to quaternary structure, the 2-oxoglutarate dehydrogenase complex is composed of OGDH (2-oxoglutarate dehydrogenase; E1), DLST (dihydrolipoamide succinyltransferase; E2), DLD (dihydrolipoamide dehydrogenase; E3) and the assembly factor KGD4. It contains multiple copies of the three enzymatic components (E1, E2 and E3). In the nucleus, the 2-oxoglutarate dehydrogenase complex associates with KAT2A. Interacts with ABHD11; this interaction maintains the functional lipoylation of the 2-oxoglutarate dehydrogenase complex. (R)-lipoate serves as cofactor.

It is found in the mitochondrion matrix. It localises to the nucleus. It catalyses the reaction N(6)-[(R)-dihydrolipoyl]-L-lysyl-[protein] + succinyl-CoA = N(6)-[(R)-S(8)-succinyldihydrolipoyl]-L-lysyl-[protein] + CoA. The protein operates within amino-acid degradation; L-lysine degradation via saccharopine pathway; glutaryl-CoA from L-lysine: step 6/6. It functions in the pathway carbohydrate metabolism; tricarboxylic acid cycle. Functionally, dihydrolipoamide succinyltransferase (E2) component of the 2-oxoglutarate dehydrogenase complex. The 2-oxoglutarate dehydrogenase complex catalyzes the overall conversion of 2-oxoglutarate to succinyl-CoA and CO(2). The 2-oxoglutarate dehydrogenase complex is mainly active in the mitochondrion. A fraction of the 2-oxoglutarate dehydrogenase complex also localizes in the nucleus and is required for lysine succinylation of histones: associates with KAT2A on chromatin and provides succinyl-CoA to histone succinyltransferase KAT2A. This is Dihydrolipoyllysine-residue succinyltransferase component of 2-oxoglutarate dehydrogenase complex, mitochondrial from Sus scrofa (Pig).